The chain runs to 308 residues: Ribonuclease Z (308 aa).

The Zn(2+) site is built by His-60, His-62, Asp-64, His-65, His-140, Asp-209, and His-269. Asp-64 (proton acceptor) is an active-site residue.

The protein belongs to the RNase Z family. Homodimer. Requires Zn(2+) as cofactor.

It catalyses the reaction Endonucleolytic cleavage of RNA, removing extra 3' nucleotides from tRNA precursor, generating 3' termini of tRNAs. A 3'-hydroxy group is left at the tRNA terminus and a 5'-phosphoryl group is left at the trailer molecule.. In terms of biological role, zinc phosphodiesterase, which displays some tRNA 3'-processing endonuclease activity. Probably involved in tRNA maturation, by removing a 3'-trailer from precursor tRNA. This chain is Ribonuclease Z, found in Methanococcus maripaludis (strain DSM 14266 / JCM 13030 / NBRC 101832 / S2 / LL).